The following is an 845-amino-acid chain: Beta-mannosidase B (845 aa).

E432 (proton donor) is an active-site residue. 2 N-linked (GlcNAc...) asparagine glycosylation sites follow: N717 and N723.

It belongs to the glycosyl hydrolase 2 family. Beta-mannosidase B subfamily.

The enzyme catalyses Hydrolysis of terminal, non-reducing beta-D-mannose residues in beta-D-mannosides.. It functions in the pathway glycan metabolism; N-glycan degradation. Functionally, exoglycosidase that cleaves the single beta-linked mannose residue from the non-reducing end of beta-mannosidic oligosaccharides of various complexity and length. Prefers mannobiose over mannotriose and has no activity against polymeric mannan. Is also severely restricted by galactosyl substitutions at the +1 subsite. In Aspergillus clavatus (strain ATCC 1007 / CBS 513.65 / DSM 816 / NCTC 3887 / NRRL 1 / QM 1276 / 107), this protein is Beta-mannosidase B (mndB).